We begin with the raw amino-acid sequence, 215 residues long: Cytochrome b6 (215 aa).

A helical transmembrane segment spans residues 32 to 52 (IFYCLGGITFTCFIIQVATGF). Cysteine 35 serves as a coordination point for heme c. Heme b-binding residues include histidine 86 and histidine 100. Transmembrane regions (helical) follow at residues 90–110 (ASMM…TGGF), 116–136 (LTWV…VTGY), and 186–206 (LHTF…FLMI). Residues histidine 187 and histidine 202 each contribute to the heme b site.

Belongs to the cytochrome b family. PetB subfamily. In terms of assembly, the 4 large subunits of the cytochrome b6-f complex are cytochrome b6, subunit IV (17 kDa polypeptide, PetD), cytochrome f and the Rieske protein, while the 4 small subunits are PetG, PetL, PetM and PetN. The complex functions as a dimer. Heme b is required as a cofactor. Heme c serves as cofactor.

The protein localises to the plastid. It localises to the chloroplast thylakoid membrane. Its function is as follows. Component of the cytochrome b6-f complex, which mediates electron transfer between photosystem II (PSII) and photosystem I (PSI), cyclic electron flow around PSI, and state transitions. This chain is Cytochrome b6, found in Euglena gracilis.